We begin with the raw amino-acid sequence, 255 residues long: Tryptophan synthase alpha chain (255 aa).

Catalysis depends on proton acceptor residues glutamate 51 and aspartate 62.

The protein belongs to the TrpA family. Tetramer of two alpha and two beta chains.

It carries out the reaction (1S,2R)-1-C-(indol-3-yl)glycerol 3-phosphate + L-serine = D-glyceraldehyde 3-phosphate + L-tryptophan + H2O. It functions in the pathway amino-acid biosynthesis; L-tryptophan biosynthesis; L-tryptophan from chorismate: step 5/5. Functionally, the alpha subunit is responsible for the aldol cleavage of indoleglycerol phosphate to indole and glyceraldehyde 3-phosphate. The chain is Tryptophan synthase alpha chain from Maridesulfovibrio salexigens (strain ATCC 14822 / DSM 2638 / NCIMB 8403 / VKM B-1763) (Desulfovibrio salexigens).